A 130-amino-acid polypeptide reads, in one-letter code: Large ribosomal subunit protein bL17 (130 aa).

It belongs to the bacterial ribosomal protein bL17 family. In terms of assembly, part of the 50S ribosomal subunit. Contacts protein L32.

The polypeptide is Large ribosomal subunit protein bL17 (Paraburkholderia xenovorans (strain LB400)).